Consider the following 491-residue polypeptide: Arginine decarboxylase (491 aa).

Lys-227 bears the N6-(pyridoxal phosphate)lysine mark.

Belongs to the Orn/Lys/Arg decarboxylase class-I family. Pyridoxal 5'-phosphate is required as a cofactor.

It is found in the cytoplasm. It catalyses the reaction L-arginine + H(+) = agmatine + CO2. The protein operates within amine and polyamine biosynthesis; agmatine biosynthesis; agmatine from L-arginine: step 1/1. Its function is as follows. Catalyzes the formation of agmatine from arginine. This is Arginine decarboxylase (speA) from Halalkalibacterium halodurans (strain ATCC BAA-125 / DSM 18197 / FERM 7344 / JCM 9153 / C-125) (Bacillus halodurans).